Consider the following 969-residue polypeptide: RNA polymerase-associated protein RapA (969 aa).

The Helicase ATP-binding domain maps to 162 to 339 (EVGQRVAPRV…FARLALLDAD (178 aa)). 175–182 (DEVGLGKT) is an ATP binding site. The DEAH box signature appears at 285-288 (DEAH). Residues 492–663 (RIEWLITFLK…GFLKNPQAVG (172 aa)) enclose the Helicase C-terminal domain.

Belongs to the SNF2/RAD54 helicase family. RapA subfamily. Interacts with the RNAP. Has a higher affinity for the core RNAP than for the holoenzyme. Its ATPase activity is stimulated by binding to RNAP.

In terms of biological role, transcription regulator that activates transcription by stimulating RNA polymerase (RNAP) recycling in case of stress conditions such as supercoiled DNA or high salt concentrations. Probably acts by releasing the RNAP, when it is trapped or immobilized on tightly supercoiled DNA. Does not activate transcription on linear DNA. Probably not involved in DNA repair. This is RNA polymerase-associated protein RapA from Actinobacillus pleuropneumoniae serotype 7 (strain AP76).